Reading from the N-terminus, the 350-residue chain is Serpentine receptor class beta-12 (350 aa).

The Extracellular segment spans residues 1 to 21 (MSEANLTECELAYQLTYHPFY). Asn-5 carries an N-linked (GlcNAc...) asparagine glycan. Residues 22–42 (MIAQFWSFFVSLLAMPSLIFF) traverse the membrane as a helical segment. At 43–57 (MVEKVFKLPFHGNLK) the chain is on the cytoplasmic side. A helical membrane pass occupies residues 58–78 (FLLVSYFIGTFLFASIICFTF). Topologically, residues 79–103 (GYHFFVPFFVTSNCDLIINATLFKY) are extracellular. The N-linked (GlcNAc...) asparagine glycan is linked to Asn-97. Residues 104-124 (GHMIALIFMTIPMILPTAFTV) traverse the membrane as a helical segment. Over 125–141 (ERFVALKMAHSYEHVRT) the chain is Cytoplasmic. Residues 142 to 162 (LLGPVLVLVVIAIDSMFLYDI) form a helical membrane-spanning segment. The Extracellular portion of the chain corresponds to 163-189 (YGQEKFDKPFINFILVPATSALQFNSF). The chain crosses the membrane as a helical span at residues 190 to 210 (LWYMLYLKITNFICNLILLFI). The Cytoplasmic portion of the chain corresponds to 211–243 (HKILHQSSRYRRKNVSLSVKYEMQEISQSSRFT). Residues 244–264 (LIVTFTHLLFFGWYVSTILLI) traverse the membrane as a helical segment. Residues 265–282 (RTVGPDFFRGFINYTVMR) are Extracellular-facing. Asn-277 is a glycosylation site (N-linked (GlcNAc...) asparagine). Residues 283–303 (GVYCATPTYNLVIVFIGFKAL) form a helical membrane-spanning segment. The Cytoplasmic portion of the chain corresponds to 304–350 (NHLNFKRNNKVQSTIQIKSTGQEGAENYDNAISNYWDSVYTMNKSKL).

Belongs to the nematode receptor-like protein srb family. Expressed throughout the head.

It localises to the cell membrane. The protein resides in the perikaryon. The protein localises to the cell projection. Its subcellular location is the dendrite. Its function is as follows. G-protein coupled receptor. Plays a role in the navigational capacity of sperm and promotes the targeting of sperm derived from males to the fertilization site in the uterus of hermaphrodites. The protein is Serpentine receptor class beta-12 of Caenorhabditis elegans.